A 487-amino-acid chain; its full sequence is Probable Xaa-Pro aminopeptidase CPSG_02684 (487 aa).

Residues 1 to 10 are compositionally biased toward polar residues; that stretch reads MAGSNTLSSS. The tract at residues 1 to 22 is disordered; it reads MAGSNTLSSSEHGDDPRGHSYS. The Mn(2+) site is built by Asp275, Asp286, Glu421, and Glu460.

Belongs to the peptidase M24B family. Mn(2+) serves as cofactor.

It catalyses the reaction Release of any N-terminal amino acid, including proline, that is linked to proline, even from a dipeptide or tripeptide.. In terms of biological role, catalyzes the removal of a penultimate prolyl residue from the N-termini of peptides. The protein is Probable Xaa-Pro aminopeptidase CPSG_02684 of Coccidioides posadasii (strain RMSCC 757 / Silveira) (Valley fever fungus).